We begin with the raw amino-acid sequence, 278 residues long: HTH-type transcriptional activator RhaS (278 aa).

The HTH araC/xylS-type domain occupies 174-272 (NQLMAWLEDH…SWSPREIRQG (99 aa)). DNA-binding regions (H-T-H motif) lie at residues 191-212 (ETVADVFSLSLRTLHRQLKQHT) and 239-262 (VTDIAYRCGFGDSNHFSTLFRREF).

In terms of assembly, binds DNA as a dimer.

It localises to the cytoplasm. In terms of biological role, activates expression of the rhaBAD and rhaT operons. The sequence is that of HTH-type transcriptional activator RhaS from Enterobacter sp. (strain 638).